The primary structure comprises 256 residues: Thiazole synthase (256 aa).

Lysine 98 (schiff-base intermediate with DXP) is an active-site residue. Residues glycine 159, 185–186 (AG), and 207–208 (NT) each bind 1-deoxy-D-xylulose 5-phosphate.

It belongs to the ThiG family. Homotetramer. Forms heterodimers with either ThiH or ThiS.

Its subcellular location is the cytoplasm. It carries out the reaction [ThiS sulfur-carrier protein]-C-terminal-Gly-aminoethanethioate + 2-iminoacetate + 1-deoxy-D-xylulose 5-phosphate = [ThiS sulfur-carrier protein]-C-terminal Gly-Gly + 2-[(2R,5Z)-2-carboxy-4-methylthiazol-5(2H)-ylidene]ethyl phosphate + 2 H2O + H(+). It functions in the pathway cofactor biosynthesis; thiamine diphosphate biosynthesis. Its function is as follows. Catalyzes the rearrangement of 1-deoxy-D-xylulose 5-phosphate (DXP) to produce the thiazole phosphate moiety of thiamine. Sulfur is provided by the thiocarboxylate moiety of the carrier protein ThiS. In vitro, sulfur can be provided by H(2)S. This is Thiazole synthase from Aliivibrio fischeri (strain ATCC 700601 / ES114) (Vibrio fischeri).